The chain runs to 1181 residues: HEAT repeat-containing protein 6 (1181 aa).

The HEAT 1 repeat unit spans residues 159 to 198 (LELLGETGLLMKLSDLAQSDPEVRRAAVHCMANLCLSVPG). Disordered regions lie at residues 294–347 (DGRT…PVTG) and 371–407 (LDGS…AEGG). Residues 300–312 (KPQQSESSASRPT) are compositionally biased toward polar residues. A compositionally biased stretch (basic residues) spans 313 to 325 (LNKKKKSKVKPKK). A phosphoserine mark is found at S336, S337, S399, and S402. Positions 383–399 (SSPFSSSSWKRVSSSES) are enriched in low complexity. HEAT repeat units lie at residues 452–490 (ELGS…GSKQ), 514–552 (SSIR…DAPY), and 558–595 (SLLT…THAP). Residues 613-648 (NSNSATPHLSPPDWWKKAPAGPSLEETSVSSPKGSS) are disordered. T618 bears the Phosphothreonine mark. Positions 637–646 (EETSVSSPKG) are enriched in polar residues. At S643 the chain carries Phosphoserine.

This Pongo abelii (Sumatran orangutan) protein is HEAT repeat-containing protein 6 (HEATR6).